The primary structure comprises 358 residues: Homoserine O-succinyltransferase (358 aa).

Cysteine 146 acts as the Acyl-thioester intermediate in catalysis. 2 residues coordinate substrate: lysine 167 and serine 196. Histidine 239 acts as the Proton acceptor in catalysis. Glutamate 241 is a catalytic residue. Residue arginine 253 participates in substrate binding.

The protein belongs to the MetA family.

The protein resides in the cytoplasm. The enzyme catalyses L-homoserine + succinyl-CoA = O-succinyl-L-homoserine + CoA. It functions in the pathway amino-acid biosynthesis; L-methionine biosynthesis via de novo pathway; O-succinyl-L-homoserine from L-homoserine: step 1/1. In terms of biological role, transfers a succinyl group from succinyl-CoA to L-homoserine, forming succinyl-L-homoserine. This is Homoserine O-succinyltransferase from Nitrosococcus oceani (strain ATCC 19707 / BCRC 17464 / JCM 30415 / NCIMB 11848 / C-107).